The following is a 242-amino-acid chain: Venom nerve growth factor (242 aa).

Positions 1-18 are cleaved as a signal peptide; sequence MSMMCYTLIIAFLIGIWA. Positions 19 to 125 are excised as a propeptide; sequence APKSEDNVPL…TLNRNIRAKR (107 aa). Residues 47 to 66 are compositionally biased toward basic and acidic residues; the sequence is GLKTSRNTDQRHPAPKKAED. The interval 47–70 is disordered; sequence GLKTSRNTDQRHPAPKKAEDQELG. 3 disulfide bridges follow: cysteine 139–cysteine 203, cysteine 181–cysteine 231, and cysteine 191–cysteine 233. A glycan (N-linked (GlcNAc...) asparagine) is linked at asparagine 166.

This sequence belongs to the NGF-beta family. As to quaternary structure, homodimer; non-covalently linked. In terms of tissue distribution, expressed by the venom gland.

The protein resides in the secreted. Nerve growth factor is important for the development and maintenance of the sympathetic and sensory nervous systems. It stimulates division and differentiation of sympathetic and embryonic sensory neurons as well as basal forebrain cholinergic neurons in the brain. Its relevance in the snake venom is not clear. However, it has been shown to inhibit metalloproteinase-dependent proteolysis of platelet glycoprotein Ib alpha, suggesting a metalloproteinase inhibition to prevent metalloprotease autodigestion and/or protection against prey proteases. Binds a lipid between the two protein chains in the homodimer. The lipid-bound form promotes histamine relase from mouse mast cells, contrary to the lipid-free form. In Drysdalia coronoides (White-lipped snake), this protein is Venom nerve growth factor.